The chain runs to 176 residues: Large ribosomal subunit protein uL10 (176 aa).

This sequence belongs to the universal ribosomal protein uL10 family. Part of the ribosomal stalk of the 50S ribosomal subunit. The N-terminus interacts with L11 and the large rRNA to form the base of the stalk. The C-terminus forms an elongated spine to which L12 dimers bind in a sequential fashion forming a multimeric L10(L12)X complex.

Functionally, forms part of the ribosomal stalk, playing a central role in the interaction of the ribosome with GTP-bound translation factors. The protein is Large ribosomal subunit protein uL10 (rplJ) of Streptomyces antibioticus.